A 301-amino-acid chain; its full sequence is Phosphonates import ATP-binding protein PhnC (301 aa).

Residues 8 to 256 (IRIERLSKTF…LLKTLYGDEA (249 aa)) enclose the ABC transporter domain. 41–48 (GASGSGKS) provides a ligand contact to ATP. The disordered stretch occupies residues 264-287 (AQGPDDTESKNTADNTPLQDAAPA).

It belongs to the ABC transporter superfamily. Phosphonates importer (TC 3.A.1.9.1) family. As to quaternary structure, the complex is composed of two ATP-binding proteins (PhnC), two transmembrane proteins (PhnE) and a solute-binding protein (PhnD).

It is found in the cell inner membrane. It catalyses the reaction phosphonate(out) + ATP + H2O = phosphonate(in) + ADP + phosphate + H(+). In terms of biological role, part of the ABC transporter complex PhnCDE involved in phosphonates import. Responsible for energy coupling to the transport system. The chain is Phosphonates import ATP-binding protein PhnC from Paraburkholderia xenovorans (strain LB400).